We begin with the raw amino-acid sequence, 220 residues long: Iron-sulfur cluster repair protein YtfE (220 aa).

This sequence belongs to the RIC family. YtfE subfamily. In terms of assembly, homodimer.

It is found in the cytoplasm. Functionally, di-iron-containing protein involved in the repair of iron-sulfur clusters damaged by oxidative and nitrosative stress conditions. The protein is Iron-sulfur cluster repair protein YtfE of Salmonella paratyphi A (strain AKU_12601).